The primary structure comprises 500 residues: Organic cation/carnitine transporter 7 (500 aa).

The Cytoplasmic portion of the chain corresponds to 1-23 (MADGNTRFTVDEALVAMGFGKFQ). Residues 24-44 (IYVLAYAGMGWVAEAMEMMLL) traverse the membrane as a helical segment. Over 45–62 (SFVGPAVQSLWNLSARQE) the chain is Extracellular. N56 carries an N-linked (GlcNAc...) asparagine glycan. The chain crosses the membrane as a helical span at residues 63–83 (SLITSVVFAGMLIGAYSWGIV). Residues 84-97 (SDKHGRRKGFIITA) lie on the Cytoplasmic side of the membrane. The chain crosses the membrane as a helical span at residues 98–118 (VVTFVAGFLSAFSPNYMWLII). Residues 119 to 120 (LR) lie on the Extracellular side of the membrane. The chain crosses the membrane as a helical span at residues 121-141 (CLVGLGLGGGPVLASWYLEFI). 137-144 (YLEFIPAP) contacts ATP. Residues 142 to 150 (PAPSRGTWM) lie on the Cytoplasmic side of the membrane. A helical transmembrane segment spans residues 151–171 (VVFSAFWTVGTIFEASLAWLV). Topologically, residues 172–174 (MPR) are extracellular. A helical membrane pass occupies residues 175 to 195 (LGWRWLLAFSSVPSSLLLLFY). The Cytoplasmic segment spans residues 196–293 (RWTSESPRYL…ALLSPTLMKR (98 aa)). The helical transmembrane segment at 294–314 (TLLLWVVFFGNAFAYYGVVLL) threads the bilayer. At 315–341 (TTELNNSHNRCYPTEKQLRNSNDVNYR) the chain is on the extracellular side. N319 carries N-linked (GlcNAc...) asparagine glycosylation. A helical transmembrane segment spans residues 342–362 (DVFIASFAEFPGLLISAAMVD). At 363–367 (RLGRK) the chain is on the cytoplasmic side. The chain crosses the membrane as a helical span at residues 368–387 (ASMASMLFTCCIFLLPLLSH). The Extracellular segment spans residues 388–401 (QSPFITTVLLFGGR). Residues 402–422 (ICISAAFTVVYIYAPEIYPTA) traverse the membrane as a helical segment. Residues 423–429 (VRTTGVG) lie on the Cytoplasmic side of the membrane. A helical transmembrane segment spans residues 430 to 450 (VGSSVGRIGGILCPLVAVGLV). The Extracellular segment spans residues 451–456 (HGCHQT). The helical transmembrane segment at 457–477 (IAVLLFEVVILVSGICVCLFP) threads the bilayer. The Cytoplasmic portion of the chain corresponds to 478 to 500 (FETSGRDLTDSISASKEPPSASV).

It belongs to the major facilitator (TC 2.A.1) superfamily. Organic cation transporter (TC 2.A.1.19) family. As to expression, expressed in pollen.

The protein resides in the membrane. Its function is as follows. High affinity carnitine transporter involved in the active cellular uptake of carnitine. Also transports organic cations. The chain is Organic cation/carnitine transporter 7 (OCT7) from Arabidopsis thaliana (Mouse-ear cress).